The chain runs to 172 residues: Sec-independent protein translocase protein TatB (172 aa).

A helical membrane pass occupies residues 1–21 (MIDLGISKLALIGAVALVVIG). A disordered region spans residues 97–129 (GDPASRQTATQAAEWRPAPAKSRNGRNSWRNKQ).

Belongs to the TatB family. The Tat system comprises two distinct complexes: a TatABC complex, containing multiple copies of TatA, TatB and TatC subunits, and a separate TatA complex, containing only TatA subunits. Substrates initially bind to the TatABC complex, which probably triggers association of the separate TatA complex to form the active translocon.

Its subcellular location is the cell inner membrane. In terms of biological role, part of the twin-arginine translocation (Tat) system that transports large folded proteins containing a characteristic twin-arginine motif in their signal peptide across membranes. Together with TatC, TatB is part of a receptor directly interacting with Tat signal peptides. TatB may form an oligomeric binding site that transiently accommodates folded Tat precursor proteins before their translocation. The polypeptide is Sec-independent protein translocase protein TatB (Ralstonia nicotianae (strain ATCC BAA-1114 / GMI1000) (Ralstonia solanacearum)).